The following is a 260-amino-acid chain: Global transcriptional regulator CodY (260 aa).

Positions 1–159 (MPNLLEKTRK…SSTVVGIQLL (159 aa)) are GAF domain. The segment at residues 207–226 (ASVIADRIGITRSVIVNALR) is a DNA-binding region (H-T-H motif).

It belongs to the CodY family.

It is found in the cytoplasm. Functionally, DNA-binding global transcriptional regulator which is involved in the adaptive response to starvation and acts by directly or indirectly controlling the expression of numerous genes in response to nutrient availability. During rapid exponential growth, CodY is highly active and represses genes whose products allow adaptation to nutrient depletion. The chain is Global transcriptional regulator CodY from Streptococcus pyogenes serotype M4 (strain MGAS10750).